Reading from the N-terminus, the 398-residue chain is Acetyl-CoA acetyltransferase erg10B, cytosolic (398 aa).

Residue cysteine 92 is the Acyl-thioester intermediate of the active site. Residue tyrosine 187 participates in K(+) binding. 2 residues coordinate CoA: asparagine 229 and lysine 232. Residues alanine 249, proline 250, and serine 252 each coordinate K(+). A CoA-binding site is contributed by serine 253. Valine 350 is a K(+) binding site. Residues histidine 354 and cysteine 384 each act as proton acceptor in the active site. Asparagine 385 contacts chloride.

The protein belongs to the thiolase-like superfamily. Thiolase family. In terms of assembly, homotetramer. K(+) serves as cofactor.

The protein resides in the cytoplasm. Its subcellular location is the cytosol. The enzyme catalyses 2 acetyl-CoA = acetoacetyl-CoA + CoA. It functions in the pathway metabolic intermediate biosynthesis; (R)-mevalonate biosynthesis; (R)-mevalonate from acetyl-CoA: step 1/3. Activity is increased by monovalent cations such as K(+), Rb(+) or Cs(+). Functionally, acetyl-CoA acetyltransferase; part of the first module of ergosterol biosynthesis pathway that includes the early steps of the pathway, conserved across all eukaryotes, and which results in the formation of mevalonate from acetyl-coenzyme A (acetyl-CoA). In this module, the cytosolic acetyl-CoA acetyltransferase erg10B catalyzes the formation of acetoacetyl-CoA. The hydroxymethylglutaryl-CoA synthases AFUA_8G07210 and AFUA_3G10660 then condense acetyl-CoA with acetoacetyl-CoA to form HMG-CoA. The rate-limiting step of the early module is the reduction to mevalonate by the 3-hydroxy-3-methylglutaryl-coenzyme A (HMG-CoA) reductases hmg1 and hmg2. Mevalonate is also a precursor for the extracellular siderophore triacetylfusarinine C (TAFC). The sequence is that of Acetyl-CoA acetyltransferase erg10B, cytosolic from Aspergillus fumigatus (strain CBS 144.89 / FGSC A1163 / CEA10) (Neosartorya fumigata).